Reading from the N-terminus, the 359-residue chain is Peptide chain release factor 1 (359 aa).

Q235 bears the N5-methylglutamine mark.

This sequence belongs to the prokaryotic/mitochondrial release factor family. Methylated by PrmC. Methylation increases the termination efficiency of RF1.

The protein localises to the cytoplasm. Peptide chain release factor 1 directs the termination of translation in response to the peptide chain termination codons UAG and UAA. This is Peptide chain release factor 1 from Verminephrobacter eiseniae (strain EF01-2).